Here is a 1486-residue protein sequence, read N- to C-terminus: Chromosome partition protein MukB (1486 aa).

ATP is bound at residue 34 to 41 (GGNGAGKS). Coiled coils occupy residues 326 to 418 (LEAD…QYNQ), 444 to 480 (LETF…QAYQ), and 509 to 603 (RHLA…RAPV). Residues 666-783 (PGGSEDQRLN…EVPLFGRAAR (118 aa)) are flexible hinge. Coiled-coil stretches lie at residues 835–923 (EAEI…AKLE), 977–1115 (EMLS…TAKA), and 1209–1266 (VEAI…QNVS).

This sequence belongs to the SMC family. MukB subfamily. Homodimerization via its hinge domain. Binds to DNA via its C-terminal region. Interacts, and probably forms a ternary complex, with MukE and MukF via its C-terminal region. The complex formation is stimulated by calcium or magnesium. Interacts with tubulin-related protein FtsZ.

It localises to the cytoplasm. The protein resides in the nucleoid. Its function is as follows. Plays a central role in chromosome condensation, segregation and cell cycle progression. Functions as a homodimer, which is essential for chromosome partition. Involved in negative DNA supercoiling in vivo, and by this means organize and compact chromosomes. May achieve or facilitate chromosome segregation by condensation DNA from both sides of a centrally located replisome during cell division. This Shigella flexneri serotype 5b (strain 8401) protein is Chromosome partition protein MukB.